We begin with the raw amino-acid sequence, 102 residues long: Transposable element activator uncharacterized 12 kDa protein (102 aa).

Positions 24 to 51 (HNHNQNHNHSHNLNPKKKHHRRGQRSAH) are enriched in basic residues. The segment at 24–55 (HNHNQNHNHSHNLNPKKKHHRRGQRSAHRMYG) is disordered.

This is Transposable element activator uncharacterized 12 kDa protein from Zea mays (Maize).